We begin with the raw amino-acid sequence, 198 residues long: ATP-dependent Clp protease proteolytic subunit (198 aa).

The active-site Nucleophile is serine 103. Residue histidine 128 is part of the active site.

Belongs to the peptidase S14 family. As to quaternary structure, fourteen ClpP subunits assemble into 2 heptameric rings which stack back to back to give a disk-like structure with a central cavity, resembling the structure of eukaryotic proteasomes.

The protein resides in the cytoplasm. It carries out the reaction Hydrolysis of proteins to small peptides in the presence of ATP and magnesium. alpha-casein is the usual test substrate. In the absence of ATP, only oligopeptides shorter than five residues are hydrolyzed (such as succinyl-Leu-Tyr-|-NHMec, and Leu-Tyr-Leu-|-Tyr-Trp, in which cleavage of the -Tyr-|-Leu- and -Tyr-|-Trp bonds also occurs).. Cleaves peptides in various proteins in a process that requires ATP hydrolysis. Has a chymotrypsin-like activity. Plays a major role in the degradation of misfolded proteins. The protein is ATP-dependent Clp protease proteolytic subunit of Ruthia magnifica subsp. Calyptogena magnifica.